Reading from the N-terminus, the 243-residue chain is Orotidine 5'-phosphate decarboxylase (243 aa).

Substrate contacts are provided by residues Asp12, Lys34, 61 to 70 (DLKFHDIPNT), Thr125, Arg187, Gln196, Gly216, and Arg217. Catalysis depends on Lys63, which acts as the Proton donor.

This sequence belongs to the OMP decarboxylase family. Type 1 subfamily. As to quaternary structure, homodimer.

The enzyme catalyses orotidine 5'-phosphate + H(+) = UMP + CO2. It participates in pyrimidine metabolism; UMP biosynthesis via de novo pathway; UMP from orotate: step 2/2. Catalyzes the decarboxylation of orotidine 5'-monophosphate (OMP) to uridine 5'-monophosphate (UMP). This chain is Orotidine 5'-phosphate decarboxylase, found in Heliobacterium modesticaldum (strain ATCC 51547 / Ice1).